The primary structure comprises 500 residues: Melanopsin (500 aa).

Over 1 to 65 the chain is Extracellular; sequence MSHHSSWRGH…TVDVPDHAHY (65 aa). A glycan (N-linked (GlcNAc...) asparagine) is linked at asparagine 18. Residues 66–86 form a helical membrane-spanning segment; the sequence is IIGAVILIVGITGVIGNALVI. The Cytoplasmic portion of the chain corresponds to 87–101; the sequence is YVFCRSRTLRTAGNM. The helical transmembrane segment at 102 to 122 threads the bilayer; the sequence is FVVNLAVADFFMSLTQSPVFF. Over 123–138 the chain is Extracellular; the sequence is AASLHRRWIFGERICE. A disulfide bond links cysteine 137 and cysteine 215. The chain crosses the membrane as a helical span at residues 139-159; the sequence is LYAFCGALFGICSMMTLTAIA. Topologically, residues 160 to 182 are cytoplasmic; sequence ADRCLAITQPLALVGNVSRRKAG. Residues 183–203 traverse the membrane as a helical segment; that stretch reads AVLAVVWLYSLGWSLPPFFGW. The Extracellular portion of the chain corresponds to 204–232; the sequence is SAYVPEGLQTSCSWDYMTFTPSVRAYTIL. A helical transmembrane segment spans residues 233–253; that stretch reads LFIFVFFIPLGIIVSCYVGIF. Residues 254-286 lie on the Cytoplasmic side of the membrane; it reads QAIRAMGKEIRELDCGETQKVYERMQNEWKMAK. The helical transmembrane segment at 287–307 threads the bilayer; sequence IALLVILLFVISWSPYSVVAL. Residues 308 to 322 are Extracellular-facing; that stretch reads TATAGYSHLLTPYMN. The chain crosses the membrane as a helical span at residues 323–343; sequence SVPAVIAKASAIHNPIIYAIT. At lysine 330 the chain carries N6-(retinylidene)lysine. The Cytoplasmic portion of the chain corresponds to 344-500; that stretch reads HPKYRAAIAR…DGKALLLGGN (157 aa). Disordered stretches follow at residues 406–428, 448–470, and 481–500; these read GKKR…ADGS, VILS…AHKV, and ETDS…LGGN. 2 stretches are compositionally biased toward polar residues: residues 411-428 and 448-462; these read SSAS…ADGS and VILS…ASGQ.

This sequence belongs to the G-protein coupled receptor 1 family. Opsin subfamily. Expressed in a subset of retinal horizontal cells as well as in retinal ganglion cells.

The protein localises to the cell membrane. In terms of biological role, photoreceptor implicated in non-image-forming responses to light. In Rutilus rutilus (Roach), this protein is Melanopsin (opn4).